A 501-amino-acid chain; its full sequence is Cytochrome P450 monooxygeanse terP (501 aa).

The helical transmembrane segment at 2–22 threads the bilayer; sequence PSLLLSLLLLQVPIICAWLLV. Cys-441 is a binding site for heme.

Belongs to the cytochrome P450 family. Requires heme as cofactor.

It localises to the membrane. It participates in secondary metabolite biosynthesis. Its function is as follows. Cytochrome P450 monooxygeanse; part of the gene cluster that mediates the biosynthesis of terpendoles, indole-diterpene (IDT) mycotoxins including terpendole I, terpendole K, terpendole C, as well as the kinesin Eg5 inhibitor terpendole E. TerP has dual activity and is able to convert terpendole E to 13-desoxyterpendole I and paspaline to 13-desoxypaxilline. Terpendoles biosynthesis begins with the synthesis of geranylgeranyl diphosphate (GGPP) by a yet unidentified GGPP synthase. Condensation of indole-3-glycerol phosphate with GGPP by the prenyltransferase terC then forms 3-geranylgeranylindole (3-GGI), followed by epoxidation and cyclization of this intermediate (by the FAD-dependent monooxygeanse terM and the terpene cyclase terB) to form paspaline. The cytochrome monooxygenase terQ then hydroxylates paspalline at C-11 to yield terpendole E. The cytochrome monooxygenase terP converts terpendole E to 13-desoxyterpendole I, and terQ converts 13-desoxyterpendole I into terpendole I. TerF and terK are required for conversion of terpendole I to terpendole C which is further converted to terpendole K. The protein is Cytochrome P450 monooxygeanse terP of Tolypocladium album (Soil fungus).